The primary structure comprises 442 residues: MNIFDHQIKNVDKGNVVAILGAQWGDEGKGKIIDMLSEYSDITCRFNGGANAGHTISVNDKKYALHLLPCGVLYDNNISVLGNGMVIHVKSLMEEIESVGGKLLDRLYLSNKAHILFDIHQIIDSIQETKKLKEGKQIGTTKRGIGPCYSTKASRIGIRLGTLKNFENFKNMYSKLIDHLMDLYNITEYDKEKELNLFYNYHLKLRDRIVDVISFMNTNLENNKKVLIEGANAAMLDIDFGTYPYVTSSCTTVGGVFSGLGIHHKKLNLVVGVVKSYLTRVGCGPFLTELNNDVGQYLREKGHEYGTTTKRPRRCGWLDIPMLLYVKCINSIDMINLTKLDVLSGLEEILLCVNFKNKKTGELLEKGCYPVEEEISEEYEPVYEKFSGWKEDISTCNEFDELPENAKKYILAIEKYLKTPIVWIGVGPNRKNMIVKKNFNLN.

GTP-binding positions include 25 to 31, 53 to 55, and Lys62; these read GDEGKGK and GHT. The Proton acceptor role is filled by Asp26. Mg(2+)-binding residues include Asp26 and Gly53. Residues 26 to 29 and 51 to 54 contribute to the IMP site; these read DEGK and NAGH. His54 serves as the catalytic Proton donor. Positions 141, 155, 232, and 247 each coordinate IMP. GTP is bound at residue Thr307. 307 to 313 lines the substrate pocket; that stretch reads TTTKRPR. Residue Arg311 coordinates IMP. GTP is bound by residues Arg313, 339 to 341, and 425 to 427; these read KLD and GVG.

It belongs to the adenylosuccinate synthetase family. In terms of assembly, homodimer. Mg(2+) serves as cofactor.

It is found in the cytoplasm. The catalysed reaction is IMP + L-aspartate + GTP = N(6)-(1,2-dicarboxyethyl)-AMP + GDP + phosphate + 2 H(+). It functions in the pathway purine metabolism; AMP biosynthesis via de novo pathway; AMP from IMP: step 1/2. Its function is as follows. Plays an important role in the salvage pathway for purine nucleotide biosynthesis. Catalyzes the first committed step in the biosynthesis of AMP from IMP. This is Adenylosuccinate synthetase (Adss) from Plasmodium falciparum (isolate 3D7).